The following is a 115-amino-acid chain: Ribonuclease P protein component 4 (115 aa).

Residues cysteine 66, cysteine 69, cysteine 96, and cysteine 99 each coordinate Zn(2+).

The protein belongs to the eukaryotic/archaeal RNase P protein component 4 family. Consists of a catalytic RNA component and at least 4-5 protein subunits. It depends on Zn(2+) as a cofactor.

It localises to the cytoplasm. It carries out the reaction Endonucleolytic cleavage of RNA, removing 5'-extranucleotides from tRNA precursor.. Part of ribonuclease P, a protein complex that generates mature tRNA molecules by cleaving their 5'-ends. This is Ribonuclease P protein component 4 from Hyperthermus butylicus (strain DSM 5456 / JCM 9403 / PLM1-5).